Here is a 293-residue protein sequence, read N- to C-terminus: Formamidopyrimidine-DNA glycosylase (293 aa).

Residue P2 is the Schiff-base intermediate with DNA of the active site. E3 functions as the Proton donor in the catalytic mechanism. K58 acts as the Proton donor; for beta-elimination activity in catalysis. The DNA site is built by H104, R127, and R170. The segment at 257 to 293 (SVYGREGKPCRNPACGGTVERVVQSGRSTFFCASCQT) adopts an FPG-type zinc-finger fold. The active-site Proton donor; for delta-elimination activity is R283.

The protein belongs to the FPG family. As to quaternary structure, monomer. The cofactor is Zn(2+).

The catalysed reaction is Hydrolysis of DNA containing ring-opened 7-methylguanine residues, releasing 2,6-diamino-4-hydroxy-5-(N-methyl)formamidopyrimidine.. It catalyses the reaction 2'-deoxyribonucleotide-(2'-deoxyribose 5'-phosphate)-2'-deoxyribonucleotide-DNA = a 3'-end 2'-deoxyribonucleotide-(2,3-dehydro-2,3-deoxyribose 5'-phosphate)-DNA + a 5'-end 5'-phospho-2'-deoxyribonucleoside-DNA + H(+). In terms of biological role, involved in base excision repair of DNA damaged by oxidation or by mutagenic agents. Acts as a DNA glycosylase that recognizes and removes damaged bases. Has a preference for oxidized purines, such as 7,8-dihydro-8-oxoguanine (8-oxoG). Has AP (apurinic/apyrimidinic) lyase activity and introduces nicks in the DNA strand. Cleaves the DNA backbone by beta-delta elimination to generate a single-strand break at the site of the removed base with both 3'- and 5'-phosphates. The polypeptide is Formamidopyrimidine-DNA glycosylase (Brucella ovis (strain ATCC 25840 / 63/290 / NCTC 10512)).